A 112-amino-acid chain; its full sequence is cAMP-regulated phosphoprotein 19 (112 aa).

Met1 carries the N-acetylmethionine modification. Low complexity predominate over residues 1 to 11; that stretch reads MSAEVPEAASA. The interval 1 to 49 is disordered; that stretch reads MSAEVPEAASAEEQKEMEDKVTSPEKAEEAKLKARYPHLGQKPGGSDFL. Residue Ser2 is modified to N-acetylserine. Phosphoserine is present on residues Ser2 and Ser23. Positions 12 to 32 are enriched in basic and acidic residues; it reads EEQKEMEDKVTSPEKAEEAKL. Phosphoserine; by GWL is present on residues Ser62 and Ser104. Residues 73–112 are disordered; sequence KNKQLPTAAPDKTEVTGDHIPTPQDLPQRKPSLVASKLAG. Ser104 carries the post-translational modification Phosphoserine; by PKA. Lys109 is subject to N6-acetyllysine.

The protein belongs to the endosulfine family. Interacts (when phosphorylated at Ser-62) with PPP2R2D. Interacts with SNCA. Interacts with PPP2R2A; the interaction is direct and this interaction inhibits PP2A activity. In terms of processing, phosphorylation at Ser-62 by MASTL/GWL during mitosis is essential for interaction with PPP2R2D (PR55-delta) and subsequent inactivation of PP2A. Phosphorylated by PKA.

It localises to the cytoplasm. In terms of biological role, protein phosphatase inhibitor that specifically inhibits protein phosphatase 2A (PP2A) during mitosis. Inhibition of PP2A is enhanced when ARPP19 is phosphorylated. When phosphorylated at Ser-62 during mitosis, specifically interacts with PPP2R2D (PR55-delta) and inhibits its activity, leading to inactivation of PP2A, an essential condition to keep cyclin-B1-CDK1 activity high during M phase. May indirectly enhance GAP-43 expression. This chain is cAMP-regulated phosphoprotein 19 (ARPP19), found in Homo sapiens (Human).